We begin with the raw amino-acid sequence, 380 residues long: Lipid-A-disaccharide synthase (380 aa).

The protein belongs to the LpxB family.

It catalyses the reaction a lipid X + a UDP-2-N,3-O-bis[(3R)-3-hydroxyacyl]-alpha-D-glucosamine = a lipid A disaccharide + UDP + H(+). The protein operates within bacterial outer membrane biogenesis; LPS lipid A biosynthesis. Condensation of UDP-2,3-diacylglucosamine and 2,3-diacylglucosamine-1-phosphate to form lipid A disaccharide, a precursor of lipid A, a phosphorylated glycolipid that anchors the lipopolysaccharide to the outer membrane of the cell. In Pseudomonas savastanoi pv. phaseolicola (strain 1448A / Race 6) (Pseudomonas syringae pv. phaseolicola (strain 1448A / Race 6)), this protein is Lipid-A-disaccharide synthase.